A 120-amino-acid chain; its full sequence is uncharacterized protein (120 aa).

Residues 8–28 (LIVKWFVGLMLIMMMVAVSLF) traverse the membrane as a helical segment.

Its subcellular location is the membrane. This is an uncharacterized protein from Bacillus anthracis.